The following is a 590-amino-acid chain: Mannosyl-oligosaccharide 1,2-alpha-mannosidase mans-2 (590 aa).

The Cytoplasmic segment spans residues 1 to 9 (MKTVRFNKQ). A helical; Signal-anchor for type II membrane protein transmembrane segment spans residues 10–30 (ALAILAACFIFLLCVVCYFSA). At 31-590 (SSESHNAVVV…EAHPVPVLTN (560 aa)) the chain is on the lumenal side. Positions 88 to 102 (PARVESKPPGEKTST) are enriched in basic and acidic residues. Residues 88–112 (PARVESKPPGEKTSTEPEETGVGKA) form a disordered region. N-linked (GlcNAc...) asparagine glycans are attached at residues Asn-156, Asn-212, Asn-373, and Asn-402. A disulfide bridge links Cys-423 with Cys-456. Glu-470 serves as the catalytic Proton donor. Thr-580 contacts Ca(2+).

Belongs to the glycosyl hydrolase 47 family. Requires Ca(2+) as cofactor.

Its subcellular location is the membrane. It carries out the reaction N(4)-(alpha-D-Man-(1-&gt;2)-alpha-D-Man-(1-&gt;2)-alpha-D-Man-(1-&gt;3)-[alpha-D-Man-(1-&gt;2)-alpha-D-Man-(1-&gt;3)-[alpha-D-Man-(1-&gt;2)-alpha-D-Man-(1-&gt;6)]-alpha-D-Man-(1-&gt;6)]-beta-D-Man-(1-&gt;4)-beta-D-GlcNAc-(1-&gt;4)-beta-D-GlcNAc)-L-asparaginyl-[protein] (N-glucan mannose isomer 9A1,2,3B1,2,3) + 4 H2O = N(4)-(alpha-D-Man-(1-&gt;3)-[alpha-D-Man-(1-&gt;3)-[alpha-D-Man-(1-&gt;6)]-alpha-D-Man-(1-&gt;6)]-beta-D-Man-(1-&gt;4)-beta-D-GlcNAc-(1-&gt;4)-beta-D-GlcNAc)-L-asparaginyl-[protein] (N-glucan mannose isomer 5A1,2) + 4 beta-D-mannose. The catalysed reaction is N(4)-(alpha-D-Man-(1-&gt;2)-alpha-D-Man-(1-&gt;2)-alpha-D-Man-(1-&gt;3)-[alpha-D-Man-(1-&gt;3)-[alpha-D-Man-(1-&gt;2)-alpha-D-Man-(1-&gt;6)]-alpha-D-Man-(1-&gt;6)]-beta-D-Man-(1-&gt;4)-beta-D-GlcNAc-(1-&gt;4)-beta-D-GlcNAc)-L-asparaginyl-[protein] (N-glucan mannose isomer 8A1,2,3B1,3) + 3 H2O = N(4)-(alpha-D-Man-(1-&gt;3)-[alpha-D-Man-(1-&gt;3)-[alpha-D-Man-(1-&gt;6)]-alpha-D-Man-(1-&gt;6)]-beta-D-Man-(1-&gt;4)-beta-D-GlcNAc-(1-&gt;4)-beta-D-GlcNAc)-L-asparaginyl-[protein] (N-glucan mannose isomer 5A1,2) + 3 beta-D-mannose. It functions in the pathway protein modification; protein glycosylation. Functionally, involved in the maturation of Asn-linked oligosaccharides. Progressively trim alpha-1,2-linked mannose residues from Man(9)GlcNAc(2) to produce Man(5)GlcNAc(2). The chain is Mannosyl-oligosaccharide 1,2-alpha-mannosidase mans-2 from Caenorhabditis elegans.